A 60-amino-acid polypeptide reads, in one-letter code: MDHRLLEIVACPVCTGKLYFNKENQELVCKVDGLAYPLRDGIPVLLENEARALSLDEKHA.

It belongs to the UPF0434 family.

The sequence is that of UPF0434 protein Spro_1718 from Serratia proteamaculans (strain 568).